A 211-amino-acid chain; its full sequence is Guanylate kinase (211 aa).

A Guanylate kinase-like domain is found at 7 to 187 (GLLIILSGPS…AADRIIAIIR (181 aa)). Residue 14–21 (GPSGVGKA) participates in ATP binding.

This sequence belongs to the guanylate kinase family.

The protein resides in the cytoplasm. The enzyme catalyses GMP + ATP = GDP + ADP. Functionally, essential for recycling GMP and indirectly, cGMP. The sequence is that of Guanylate kinase from Aster yellows witches'-broom phytoplasma (strain AYWB).